The chain runs to 485 residues: Inosine-5'-monophosphate dehydrogenase (485 aa).

2 consecutive CBS domains span residues 99–154 (IVED…TVKE) and 156–212 (MTRE…KNAV). NAD(+) contacts are provided by residues Asp-247 and 294-296 (GIG). Residues Gly-296 and Gly-298 each contribute to the K(+) site. Residue Ser-299 participates in IMP binding. Cys-301 is a K(+) binding site. Cys-301 acts as the Thioimidate intermediate in catalysis. IMP is bound by residues 334–336 (DGG), 357–358 (GN), and 381–385 (YRGMG). The active-site Proton acceptor is the Arg-397. Residue Glu-412 coordinates IMP. K(+)-binding residues include Glu-466, Ser-467, and His-468.

Belongs to the IMPDH/GMPR family. Homotetramer. It depends on K(+) as a cofactor.

The catalysed reaction is IMP + NAD(+) + H2O = XMP + NADH + H(+). Its pathway is purine metabolism; XMP biosynthesis via de novo pathway; XMP from IMP: step 1/1. Its activity is regulated as follows. Mycophenolic acid (MPA) is a non-competitive inhibitor that prevents formation of the closed enzyme conformation by binding to the same site as the amobile flap. In contrast, mizoribine monophosphate (MZP) is a competitive inhibitor that induces the closed conformation. MPA is a potent inhibitor of mammalian IMPDHs but a poor inhibitor of the bacterial enzymes. MZP is a more potent inhibitor of bacterial IMPDH. Catalyzes the conversion of inosine 5'-phosphate (IMP) to xanthosine 5'-phosphate (XMP), the first committed and rate-limiting step in the de novo synthesis of guanine nucleotides, and therefore plays an important role in the regulation of cell growth. The protein is Inosine-5'-monophosphate dehydrogenase of Pyrococcus furiosus (strain ATCC 43587 / DSM 3638 / JCM 8422 / Vc1).